Consider the following 102-residue polypeptide: Crustacean hyperglycemic hormones 3 (102 aa).

The signal sequence occupies residues 1 to 22 (MIALRLIAVTLVVAMAASTTWA). 3 cysteine pairs are disulfide-bonded: cysteine 35–cysteine 71, cysteine 51–cysteine 67, and cysteine 54–cysteine 80. At valine 100 the chain carries Valine amide.

Belongs to the arthropod CHH/MIH/GIH/VIH hormone family.

It is found in the secreted. Functionally, hormone found in the sinus gland of isopods and decapods which controls the blood sugar level. Has a secretagogue action over the amylase released from the midgut gland. May act as a stress hormone and may be involved in the control of molting and reproduction. The sequence is that of Crustacean hyperglycemic hormones 3 (CHH3) from Penaeus monodon (Giant tiger prawn).